The primary structure comprises 128 residues: Large ribosomal subunit protein bL17 (128 aa).

This sequence belongs to the bacterial ribosomal protein bL17 family. As to quaternary structure, part of the 50S ribosomal subunit. Contacts protein L32.

The chain is Large ribosomal subunit protein bL17 from Streptococcus equi subsp. zooepidemicus (strain H70).